A 218-amino-acid chain; its full sequence is Uracil-DNA glycosylase (218 aa).

D59 serves as the catalytic Proton acceptor.

The protein belongs to the uracil-DNA glycosylase (UDG) superfamily. UNG family.

The protein resides in the cytoplasm. The enzyme catalyses Hydrolyzes single-stranded DNA or mismatched double-stranded DNA and polynucleotides, releasing free uracil.. Its function is as follows. Excises uracil residues from the DNA which can arise as a result of misincorporation of dUMP residues by DNA polymerase or due to deamination of cytosine. The chain is Uracil-DNA glycosylase from Staphylococcus aureus (strain bovine RF122 / ET3-1).